Here is a 267-residue protein sequence, read N- to C-terminus: Regulatory protein VirG (267 aa).

Residues 29 to 143 (HVLLVDDDVA…EFLARIRVAL (115 aa)) enclose the Response regulatory domain. D78 carries the 4-aspartylphosphate modification. Residues 155-255 (RRSFCFTDWT…ARGAGYFFDA (101 aa)) constitute a DNA-binding region (ompR/PhoB-type).

Post-translationally, phosphorylated by wide host range (WHR) VirA protein.

The protein localises to the cytoplasm. In terms of biological role, virG is required for the positive regulation of at least two vir loci encoded by the Ti plasmid of A.tumefaciens. The sequence is that of Regulatory protein VirG (virG) from Agrobacterium tumefaciens (strain 15955).